The chain runs to 225 residues: Urease accessory protein UreG (225 aa).

Residue 25-32 (GPVGAGKT) participates in GTP binding.

Belongs to the SIMIBI class G3E GTPase family. UreG subfamily. In terms of assembly, homodimer. UreD, UreF and UreG form a complex that acts as a GTP-hydrolysis-dependent molecular chaperone, activating the urease apoprotein by helping to assemble the nickel containing metallocenter of UreC. The UreE protein probably delivers the nickel.

The protein resides in the cytoplasm. Functionally, facilitates the functional incorporation of the urease nickel metallocenter. This process requires GTP hydrolysis, probably effectuated by UreG. The polypeptide is Urease accessory protein UreG (Haemophilus influenzae (strain ATCC 51907 / DSM 11121 / KW20 / Rd)).